Here is a 310-residue protein sequence, read N- to C-terminus: MKTLIRKFSRTAITVVLVILAFIAIFNAWVYYTESPWTRDARFSADVVAIAPDVSGLITQVNVHDNQLVKKGQILFTIDQPRYQKALEEAQADVAYYQVLAQEKRQEAGRRNRLGVQAMSREEIDQANNVLQTVLHQLAKAQATRDLAKLDLERTVIRAPADGWVTNLNVYTGEFITRGSTAVALVKQNSFYVLAYMEETKLEGVRPGYRAEITPLGSNKVLKGTVDSVAAGVTNASSTRDDKGMATIDSNLEWVRLAQRVPVRICLDNQQENIWPAGTTATVVVTGKQDRDESQDSFFRKMAHRLREFG.

Residues Ala-12–Tyr-32 form a helical membrane-spanning segment.

This sequence belongs to the membrane fusion protein (MFP) (TC 8.A.1) family.

It localises to the cell inner membrane. Forms an efflux pump with AaeB. In Escherichia coli O8 (strain IAI1), this protein is p-hydroxybenzoic acid efflux pump subunit AaeA.